The primary structure comprises 280 residues: Manganese transport system membrane protein MntC (280 aa).

9 helical membrane passes run 16-36 (ALIT…FIIL), 41-61 (LMGD…YMMG), 62-82 (MNFF…IGFV), 92-112 (TAIG…ISFA), 137-157 (TIII…EFLV), 168-188 (YGLN…LVTV), 193-213 (TVGI…AYLL), 221-241 (IMLA…FSYI), and 244-264 (LASG…AFLF).

The protein belongs to the ABC-3 integral membrane protein family.

It localises to the cell membrane. This protein is probably a component of a manganese permease, a binding protein-dependent, ATP-driven transport system. The chain is Manganese transport system membrane protein MntC (mntC) from Listeria innocua serovar 6a (strain ATCC BAA-680 / CLIP 11262).